We begin with the raw amino-acid sequence, 484 residues long: Protein nucleotidyltransferase YdiU (484 aa).

8 residues coordinate ATP: G81, G83, R84, K103, D115, G116, R166, and R173. The Proton acceptor role is filled by D244. Mg(2+) contacts are provided by N245 and D254. D254 is a binding site for ATP.

It belongs to the SELO family. Mg(2+) serves as cofactor. The cofactor is Mn(2+).

It catalyses the reaction L-seryl-[protein] + ATP = 3-O-(5'-adenylyl)-L-seryl-[protein] + diphosphate. The enzyme catalyses L-threonyl-[protein] + ATP = 3-O-(5'-adenylyl)-L-threonyl-[protein] + diphosphate. The catalysed reaction is L-tyrosyl-[protein] + ATP = O-(5'-adenylyl)-L-tyrosyl-[protein] + diphosphate. It carries out the reaction L-histidyl-[protein] + UTP = N(tele)-(5'-uridylyl)-L-histidyl-[protein] + diphosphate. It catalyses the reaction L-seryl-[protein] + UTP = O-(5'-uridylyl)-L-seryl-[protein] + diphosphate. The enzyme catalyses L-tyrosyl-[protein] + UTP = O-(5'-uridylyl)-L-tyrosyl-[protein] + diphosphate. Nucleotidyltransferase involved in the post-translational modification of proteins. It can catalyze the addition of adenosine monophosphate (AMP) or uridine monophosphate (UMP) to a protein, resulting in modifications known as AMPylation and UMPylation. This Shewanella baltica (strain OS185) protein is Protein nucleotidyltransferase YdiU.